A 504-amino-acid polypeptide reads, in one-letter code: MPAQAVVGTNSYLFRTVHAEVKGLRYLDVRAGKELSVSQKKALKEAVKELDAEGVVAITGDCGSFVHYQTAVRRMTKTPAVLSPLLQAPLLATMYMKEETILVLTNDSSDYDQAALESNLVEIGLSQEDAARFVIQGLQHIEGFSTSEVADMSDERTWAMVDTSERLRLEIMSTIEAAKKANPSLRAILLESTLLPSFSDSMRQTRGVPVFDAITLADYLAAASTDNPRFGSNIDASVWSSAMERANVMDELSQRATPAIGILRIDYSYPPAPGDVDYPGSYYYRTVQEVAAGLTFEAAQEGRPLTAQQREAMEGAIRRLEAAKGVVGITGDCGFLMNYQVDARRMSHLPCFISAMMQCHMLAASFAADEEFLVLTANGKSLAPKFGEMLSLAHVTRPEDQARFHILGCEDVDGFDAVAKGEAVDVARVTPGIVALAKAAAARRPKVRAVLLECTELPPYADALRHALRIPVLDAITLVDFVHSASTDNPAFGVDFQKSSKVFV.

It belongs to the aspartate/glutamate racemases family. ALMA1 subfamily. In terms of assembly, homotetramer.

The enzyme catalyses S,S-dimethyl-beta-propiothetin = acrylate + dimethyl sulfide + H(+). Its function is as follows. Mediates cleavage of dimethylsulfoniopropionate (DMSP) into dimethyl sulfide (DMS) and acrylate. DMS is the principal form by which sulfur is transported from oceans to the atmosphere and is a key component of the ocean sulfur cycle. This Emiliania huxleyi (strain CCMP1516) protein is Dimethylsulfoniopropionate lyase 5.